A 178-amino-acid polypeptide reads, in one-letter code: Protein-export protein SecB (178 aa).

Acidic residues predominate over residues 1–13 (MADEGDVLTDLDM). The tract at residues 1–25 (MADEGDVLTDLDMDPAAGGNGADNR) is disordered.

It belongs to the SecB family. As to quaternary structure, homotetramer, a dimer of dimers. One homotetramer interacts with 1 SecA dimer.

The protein resides in the cytoplasm. One of the proteins required for the normal export of preproteins out of the cell cytoplasm. It is a molecular chaperone that binds to a subset of precursor proteins, maintaining them in a translocation-competent state. It also specifically binds to its receptor SecA. The polypeptide is Protein-export protein SecB (Erythrobacter litoralis (strain HTCC2594)).